The primary structure comprises 1757 residues: MDSQDHKAPGFVDIVKSWIPRKSESSNMSRDFWMPDQSCPVCYECDAQFTVFNRRHHCRLCGRVFCAKCAANSIPSPSDETKDSHEEPERIRVCNYCYKQWEQGIVPPDNGASIISLHFSSSPSARSVASTTSNSSNCTIDSTAGPSPRPKMNPRASRRVSSNMDSEKSEQQNAKSRRSSDHYGHVLDSSDNQVEFFVNSSGRSDGEADDDDDYQSDFAQSYAQGNDYYGAINLDEVDHIYGSHEAHDVGVKIEPNISGFPPDQDLDSLNTETIDKTRQQENGWNDVKEGSPPCEESFEPEVVDFESDGLLWLPPEPENEEDEREAVLSDDDGDEGDRGDWGYLRPSNSFNEKDFHSKDKSSGAMKNVVEGHFRALVAQLLEVDNLPMVNEGDEEGWLDIITSLSWEAATLLKPDTSKSGGMDPGGYVKVKCIPCGRRSESMVVKGVVCKKNVAHRRMTSKIEKPRLLILGGALEYQRISNQLSSFDTLLQQEMDHLKMAVAKIDSHNPDILLVEKSVSRFAQEYLLAKDISLVLNIKRSLLERISRCTGAQIVPSIDQLTSPKLGYCDLFHVEKFVETHVSPCQVAKKMAKTLMFFDGCPKPLGCTILLKGAHEDELKKVKHVIQYGVFAAYHLALETSFLADEGASIHELPLQTPITVALPDKPSMVNRSISTIPGFTVSSAEKSPTTELRGEPHKANGDLTGNFTSSKTHFQGKLDGNDRIDPSERLLHNLDTVYCKPPETITSKDDGLVPTLESRQLSFHVEEPSVQKDQWSVLSGATEQVTDGGYTNDSAVIGNQNFNRQEQMESSKGDFHPSASDHQSILVSLSTRCVWKGSVCERAHLLRIKYYGSFDKPLGRFLRDNLFDQDQCCPSCTMPAEAHIHCYTHRQGSLTISVKKLPELLPGQREGKIWMWHRCLKCPRINGFPPATRRIVMSDAAWGLSFGKFLELSFSNHAAASRVANCGHSLHRDCLRFYGFGRMVACFRYASINIYAVTLPPAKLYFNYENQEWLQKESKEVIKKAEVLFNEVQEALSQISAKTMGAGSKGSTPNKIKLSLEELAGLLEQRKKEYKDSLQQMLNVVKDGQPTIDILLINKLRRLIIFDSYAWDECLAGAANMVRNNYLEAPKNSAPKVMGRNVSLEKLSDEKVKSIPTHVAICNDSLLQDADYETCLNQGKSFADTSGKFAIPEDVGSDRPPDCRMEFDPSEGGKDNFVESSQVVKPAHTESQFQATDLSDTLDAAWIGEQTTSENGIFRPPSRAASTNGTQIPDLRLLGSESELNFKGGPTNDEHTTQVQLPSPSFYYSLNKNYSLNSRKHIMAEDRPVYVSSYRELEWRSGARLLLPLGCNDLVLPVYDDEPTSIIAYALTSSEYKAQMSGSDKSRDRLDSGGSFSLFDSVNLLSLNSLSDLSVDMSRSLSSADEQVSQLLHSSLYLKDLHARISFTDEGPPGKVKYSVTCYYAKEFEALRMICCPSETDFIRSLGRCRKWGAQGGKSNVFFAKSLDDRFIIKQVTKTELESFIKFGPAYFKYLTESISTKSPTSLAKILGIYQVSSKHLKGGKEFKMDVLVMENLLFKRNFTRLYDLKGSTRARYNPDTSGSNTVLLDQNLVEAMPTSPIFVGSKAKRLLERAVWNDTSFLASIHVMDYSLLVGVDEERNELVLGIIDFMRQYTWDKHLETWVKTSGLLGGPKNSTPTVISPQQYKKRFRKAMTAYFLMVPDQWSPAAVVPSNSSSAEVKEEEEKDNPQAVGNKS.

Residues 36 to 102 (DQSCPVCYEC…VCNYCYKQWE (67 aa)) form an FYVE-type zinc finger. Residues Cys42, Cys45, Cys58, Cys61, Cys66, Cys69, Cys94, and Cys97 each coordinate Zn(2+). Disordered stretches follow at residues 125–193 (ARSV…SDNQ), 276–297 (KTRQ…CEES), 313–346 (LPPE…YLRP), and 684–709 (AEKS…NFTS). A compositionally biased stretch (polar residues) spans 134–145 (NSSNCTIDSTAG). Over residues 317–337 (PENEEDEREAVLSDDDGDEGD) the composition is skewed to acidic residues. Residues 1014 to 1087 (LQKESKEVIK…LQQMLNVVKD (74 aa)) are a coiled coil. Positions 1395–1719 (SFSLFDSVNL…RFRKAMTAYF (325 aa)) constitute a PIPK domain. The segment covering 1729-1739 (AAVVPSNSSSA) has biased composition (low complexity). The disordered stretch occupies residues 1729-1757 (AAVVPSNSSSAEVKEEEEKDNPQAVGNKS).

In terms of assembly, component of the PI(3,5)P2 regulatory complex at least composed of ATG18, SAC/FIG4, FAB1 and VAC14. Mg(2+) is required as a cofactor. The cofactor is Mn(2+). In terms of tissue distribution, ubiquitous with highest expression levels in pollen, seed, and senescent leaves.

Its subcellular location is the endosome membrane. The enzyme catalyses a 1,2-diacyl-sn-glycero-3-phospho-(1D-myo-inositol-3-phosphate) + ATP = a 1,2-diacyl-sn-glycero-3-phospho-(1D-myo-inositol-3,5-bisphosphate) + ADP + H(+). Its function is as follows. The PI(3,5)P2 regulatory complex regulates both the synthesis and turnover of phosphatidylinositol 3,5-bisphosphate (PtdIns(3,5)P2). Catalyzes the phosphorylation of phosphatidylinositol 3-phosphate on the fifth hydroxyl of the myo-inositol ring, to form phosphatidylinositol 3,5-bisphosphate. Plays an important role in maintenance of endomembrane homeostasis including endocytosis, vacuole formation, and vacuolar acidification processes. Required for development of viable pollen. Might mediate recycling of auxin transporters. The sequence is that of 1-phosphatidylinositol-3-phosphate 5-kinase FAB1A (FAB1A) from Arabidopsis thaliana (Mouse-ear cress).